The chain runs to 861 residues: DNA mismatch repair protein MutS (861 aa).

An ATP-binding site is contributed by 616 to 623 (GPNMGGKS).

Belongs to the DNA mismatch repair MutS family.

Functionally, this protein is involved in the repair of mismatches in DNA. It is possible that it carries out the mismatch recognition step. This protein has a weak ATPase activity. This Haemophilus influenzae (strain PittEE) protein is DNA mismatch repair protein MutS.